The sequence spans 901 residues: Protein translocase subunit SecA (901 aa).

ATP-binding positions include Q87, 105-109, and D512; that span reads GEGKT. Residues 859–901 form a disordered region; it reads HQDDDSAAAAALAAQTGERKVGRNDPCPCGSGKKYKQCHGRLQ. Zn(2+) contacts are provided by C885, C887, C896, and H897. Over residues 891–901 the composition is skewed to basic residues; the sequence is KKYKQCHGRLQ.

Belongs to the SecA family. Monomer and homodimer. Part of the essential Sec protein translocation apparatus which comprises SecA, SecYEG and auxiliary proteins SecDF-YajC and YidC. The cofactor is Zn(2+).

Its subcellular location is the cell inner membrane. It localises to the cytoplasm. The catalysed reaction is ATP + H2O + cellular proteinSide 1 = ADP + phosphate + cellular proteinSide 2.. Functionally, part of the Sec protein translocase complex. Interacts with the SecYEG preprotein conducting channel. Has a central role in coupling the hydrolysis of ATP to the transfer of proteins into and across the cell membrane, serving both as a receptor for the preprotein-SecB complex and as an ATP-driven molecular motor driving the stepwise translocation of polypeptide chains across the membrane. The protein is Protein translocase subunit SecA of Escherichia coli O157:H7.